A 175-amino-acid polypeptide reads, in one-letter code: CASP-like protein 2C1 (175 aa).

The Cytoplasmic portion of the chain corresponds to 1-7 (MVKLRET). A helical membrane pass occupies residues 8–28 (EVILRLCIVFFLLLTSCLIGL). Residues 29–45 (DSQTKEIAYIHKNVSFR) are Extracellular-facing. Asparagine 41 is a glycosylation site (N-linked (GlcNAc...) asparagine). The chain crosses the membrane as a helical span at residues 46–66 (YLLALEAELYIDVVVAAYNLV). Residues 67–91 (QLGLGWYNVEQKTSNPKWFSYLLDQ) lie on the Cytoplasmic side of the membrane. Residues 92-112 (TAAYVVFAGTSAAAQHSLLVV) form a helical membrane-spanning segment. Over 113–136 (TGSRELQWMKWCYKFTRFCFQMGS) the chain is Extracellular. Residues 137–157 (AIILNYIAAALMVLLSSISAF) traverse the membrane as a helical segment. Over 158-175 (NLFRLYSPKRFFRFKSSS) the chain is Cytoplasmic.

This sequence belongs to the Casparian strip membrane proteins (CASP) family. As to quaternary structure, homodimer and heterodimers.

The protein localises to the cell membrane. The sequence is that of CASP-like protein 2C1 from Arabidopsis thaliana (Mouse-ear cress).